Reading from the N-terminus, the 67-residue chain is uncharacterized protein (67 aa).

2 consecutive transmembrane segments (helical) span residues 13–32 and 42–64; these read IACL…GFIV and RLTN…TLGL.

Its subcellular location is the membrane. This is an uncharacterized protein from Saccharomyces cerevisiae (strain ATCC 204508 / S288c) (Baker's yeast).